The following is a 541-amino-acid chain: MKNKENILITLNQVGIEQYSNIIYNPNYDTLFKEETNKNLKGLERCILTKLQAIAVDTGKFTGRSPKDKYYVRDEKTKNIIWWSDDNNHKSNNHPINNETWKDLKKLIANNLNNKKLFVIDAFCGANKKNRLKVRFITDIAWQAHFFKNMFIEPIEQELNKFLQDFTVFSVPKAINKKWKDHKLNSENFIAINLTENTLLIGGTWYGGEIKKGLFSVMNYILPLKNIASMHCSANEGFKKDVALFFGLSGTGKTTLSTDSKRYLIGDDEHGWCKDGVFNFEGGCYAKTINLSEEKEPEIFNAIKKNAILENVMVLKDSNINFFDGTKTENSRVSYPINHIKNIVKPISQSGHPKNIIFLTADAFGVFPFVSKLSYFQGQYYFLSGFTSKLSGTERGIIDPEPTFSSCFGEAFLSLHPTVYAKILLRYIKYYNSKIFLVNTGWNGKRERYSLEYTRSIINAILDDKIEFIDENYIPIFNLKIPKKIEGVPDLFLDPRNFFSSNEEWIKQATILSKKFIKNFKKFSHTKLGKKLIKFEPKINF.

Residues arginine 64, tyrosine 206, and lysine 212 each coordinate substrate. ATP-binding positions include lysine 212, histidine 231, and 247-255 (GLSGTGKTT). Lysine 212 and histidine 231 together coordinate Mn(2+). Residue aspartate 268 participates in Mn(2+) binding. ATP-binding residues include glutamate 296, arginine 332, and threonine 454. Arginine 332 serves as a coordination point for substrate.

This sequence belongs to the phosphoenolpyruvate carboxykinase (ATP) family. As to quaternary structure, monomer. Requires Mn(2+) as cofactor.

It localises to the cytoplasm. It carries out the reaction oxaloacetate + ATP = phosphoenolpyruvate + ADP + CO2. The protein operates within carbohydrate biosynthesis; gluconeogenesis. Its function is as follows. Involved in the gluconeogenesis. Catalyzes the conversion of oxaloacetate (OAA) to phosphoenolpyruvate (PEP) through direct phosphoryl transfer between the nucleoside triphosphate and OAA. The protein is Phosphoenolpyruvate carboxykinase (ATP) of Wigglesworthia glossinidia brevipalpis.